The following is a 403-amino-acid chain: Probable tRNA sulfurtransferase (403 aa).

The THUMP domain maps to 60 to 165 (QLAEERLKPI…KEGVFLSCRT (106 aa)). ATP contacts are provided by residues 183 to 184 (ML), 208 to 209 (HF), Arg265, Gly287, and Gln296.

It belongs to the ThiI family.

It is found in the cytoplasm. The catalysed reaction is [ThiI sulfur-carrier protein]-S-sulfanyl-L-cysteine + a uridine in tRNA + 2 reduced [2Fe-2S]-[ferredoxin] + ATP + H(+) = [ThiI sulfur-carrier protein]-L-cysteine + a 4-thiouridine in tRNA + 2 oxidized [2Fe-2S]-[ferredoxin] + AMP + diphosphate. It carries out the reaction [ThiS sulfur-carrier protein]-C-terminal Gly-Gly-AMP + S-sulfanyl-L-cysteinyl-[cysteine desulfurase] + AH2 = [ThiS sulfur-carrier protein]-C-terminal-Gly-aminoethanethioate + L-cysteinyl-[cysteine desulfurase] + A + AMP + 2 H(+). It participates in cofactor biosynthesis; thiamine diphosphate biosynthesis. Functionally, catalyzes the ATP-dependent transfer of a sulfur to tRNA to produce 4-thiouridine in position 8 of tRNAs, which functions as a near-UV photosensor. Also catalyzes the transfer of sulfur to the sulfur carrier protein ThiS, forming ThiS-thiocarboxylate. This is a step in the synthesis of thiazole, in the thiamine biosynthesis pathway. The sulfur is donated as persulfide by IscS. The polypeptide is Probable tRNA sulfurtransferase (Listeria monocytogenes serovar 1/2a (strain ATCC BAA-679 / EGD-e)).